We begin with the raw amino-acid sequence, 241 residues long: Eukaryotic translation initiation factor 6 (241 aa).

It belongs to the eIF-6 family. Monomer. Associates with the 60S ribosomal subunit.

The protein localises to the cytoplasm. It is found in the nucleus. The protein resides in the nucleolus. In terms of biological role, binds to the 60S ribosomal subunit and prevents its association with the 40S ribosomal subunit to form the 80S initiation complex in the cytoplasm. Is also involved in ribosome biogenesis. Associates with pre-60S subunits in the nucleus and is involved in its nuclear export. The chain is Eukaryotic translation initiation factor 6 from Encephalitozoon cuniculi (strain GB-M1) (Microsporidian parasite).